The following is a 183-amino-acid chain: ATP synthase subunit b, chloroplastic (183 aa).

Residues 25-45 (DILATNLINLTVVVGVLIFFG) form a helical membrane-spanning segment.

This sequence belongs to the ATPase B chain family. F-type ATPases have 2 components, F(1) - the catalytic core - and F(0) - the membrane proton channel. F(1) has five subunits: alpha(3), beta(3), gamma(1), delta(1), epsilon(1). F(0) has four main subunits: a(1), b(1), b'(1) and c(10-14). The alpha and beta chains form an alternating ring which encloses part of the gamma chain. F(1) is attached to F(0) by a central stalk formed by the gamma and epsilon chains, while a peripheral stalk is formed by the delta, b and b' chains.

The protein resides in the plastid. Its subcellular location is the chloroplast thylakoid membrane. Functionally, f(1)F(0) ATP synthase produces ATP from ADP in the presence of a proton or sodium gradient. F-type ATPases consist of two structural domains, F(1) containing the extramembraneous catalytic core and F(0) containing the membrane proton channel, linked together by a central stalk and a peripheral stalk. During catalysis, ATP synthesis in the catalytic domain of F(1) is coupled via a rotary mechanism of the central stalk subunits to proton translocation. Its function is as follows. Component of the F(0) channel, it forms part of the peripheral stalk, linking F(1) to F(0). In Sorghum bicolor (Sorghum), this protein is ATP synthase subunit b, chloroplastic.